We begin with the raw amino-acid sequence, 1079 residues long: Extracellular calcium-sensing receptor (1079 aa).

Residues 1 to 19 form the signal peptide; it reads MAFSSCCWILLALTWCTSA. The Extracellular segment spans residues 20-610; sequence YGPDQRAQKK…KEIEFLSWTE (591 aa). Residues 22 to 188 are ligand-binding 1 (LB1); sequence PDQRAQKKGD…QFKSFLRTIP (167 aa). An intrachain disulfide couples Cys60 to Cys101. A phosphate-binding site is contributed by 66-70; sequence RGFRW. Ile81, Ser84, Leu87, and Leu88 together coordinate Ca(2+). Asn90 carries N-linked (GlcNAc...) asparagine glycosylation. Thr100 contributes to the Ca(2+) binding site. An N-linked (GlcNAc...) asparagine glycan is attached at Asn130. Position 145 (Thr145) interacts with Ca(2+). L-tryptophan-binding residues include Ser147, Ala168, and Ser170. Ca(2+)-binding residues include Ser170, Pro188, Asp190, Glu231, and Asp234. The ligand-binding 2 (LB2) stretch occupies residues 189-324; the sequence is NDEHQATAMA…GGTIGFALKA (136 aa). 7 cysteine pairs are disulfide-bonded: Cys236–Cys561, Cys358–Cys395, Cys437–Cys449, Cys542–Cys562, Cys546–Cys565, Cys568–Cys582, and Cys585–Cys598. The spermine site is built by Asp238 and Ser240. 2 N-linked (GlcNAc...) asparagine glycosylation sites follow: Asn261 and Asn287. Glu297 provides a ligand contact to Ca(2+). L-tryptophan is bound at residue Glu297. N-linked (GlcNAc...) asparagine glycosylation is found at Asn386 and Asn400. 415–417 is a binding site for phosphate; sequence RIS. 3 N-linked (GlcNAc...) asparagine glycosylation sites follow: Asn446, Asn468, and Asn488. Tyr489 is a binding site for Ca(2+). An N-linked (GlcNAc...) asparagine glycan is attached at Asn541. Residues 542-612 are cysteine-rich (CR); the sequence is CSRDCLAGTR…IEFLSWTEPF (71 aa). A Ca(2+)-binding site is contributed by Gly557. An N-linked (GlcNAc...) asparagine glycan is attached at Asn594. A helical transmembrane segment spans residues 611 to 636; sequence PFGIALTLFAVLGIFLTAFVLGVFIK. Residues 637–648 lie on the Cytoplasmic side of the membrane; the sequence is FRNTPIVKATNR. The intracellular loop 1 (ICL1) stretch occupies residues 637-648; that stretch reads FRNTPIVKATNR. Residues 649–668 traverse the membrane as a helical segment; it reads ELSYLLLFSLLCCFSSSLFF. Over 669 to 674 the chain is Extracellular; the sequence is IGEPQD. A helical transmembrane segment spans residues 675–698; it reads WTCRLRQPAFGISFVLCISCILVK. Residues 699–722 lie on the Cytoplasmic side of the membrane; it reads TNRVLLVFEAKIPTSFHRKWWGLN. The segment at 699 to 722 is intracellular loop 2 (ICL2); sequence TNRVLLVFEAKIPTSFHRKWWGLN. The chain crosses the membrane as a helical span at residues 723–745; the sequence is LQFLLVFLCTFMQIVICAIWLYT. The Extracellular segment spans residues 746–769; sequence APPSSYRNHELEDEIIFITCHEGS. Residues 770–789 form a helical membrane-spanning segment; that stretch reads LMALGFLIGYTCLLAAICFF. The Cytoplasmic portion of the chain corresponds to 790–805; that stretch reads FAFKSRKLPENFNEAK. Positions 790–805 are intracellular loop 3 (ICL3); it reads FAFKSRKLPENFNEAK. The helical transmembrane segment at 806-828 threads the bilayer; sequence FITFSMLIFFIVWISFIPAYAST. Over 829–832 the chain is Extracellular; sequence YGKF. Residues 833–854 traverse the membrane as a helical segment; sequence VSAVEVIAILAASFGLLACIFF. Over 855–1079 the chain is Cytoplasmic; the sequence is NKVYIILFKP…STVTENMLHS (225 aa). The C-terminus stretch occupies residues 855–1079; the sequence is NKVYIILFKP…STVTENMLHS (225 aa). An interaction with RNF19A region spans residues 880–900; the sequence is AFKVAARATLRRSNVSRQRSS. A Phosphothreonine modification is found at Thr888. The interval 890-898 is arginine-rich retention motif; the sequence is RRSNVSRQR. A phosphoserine mark is found at Ser892, Ser899, and Ser920. The segment covering 892 to 918 has biased composition (low complexity); it reads SNVSRQRSSSLGGSTGSTPSSSISSKS. The disordered stretch occupies residues 892-963; it reads SNVSRQRSSS…QPQLQQQPRC (72 aa). The span at 945–954 shows a compositional bias: pro residues; it reads PQAPSTPQPQ. The residue at position 1062 (Ser1062) is a Phosphoserine.

It belongs to the G-protein coupled receptor 3 family. Homodimer; disulfide-linked. Interacts with VCP. Interacts with ARRB1. Post-translationally, phosphorylation at Thr-888 by PKC impairs coupling with G(q)/G(11) G-proteins, while it does not affect G(i)/G(o)-coupling. Phosphorylation at Ser-892 by PKC and Ser-899 by PKA promote plasma membrane localization. In terms of processing, ubiquitinated by RNF19A; which induces proteasomal degradation.

It is found in the cell membrane. With respect to regulation, in resting state, adopts an open conformation, anion-binding promoting the inactive configuration. Upon aromatic amino acid-binding, the groove in the extracellular venus flytrap module is closed, thereby inducing the formation of a novel homodimer interface between subunits. Calcium ions stabilize the active state by enhancing homodimer interactions between membrane-proximal domains to fully activate the receptor. Upon activation, the homodimer adopts an asymmetric configuration of the 7-transmembrane region that primes one protomer for G-protein coupling. G-protein binding expands the transmembrane dimer interface; the restriction imposed by the receptor dimer, in combination with intracellular loop 2 (ICL2), enables G-protein activation by facilitating conformational transition of G-protein alpha. Coupling to different classes of G-proteins results in distinct CASR-G-protein interfaces. In contrast to human protein, not activated by AMG 416, a D-amino acid-containing peptide agonist: this is probably due to the absence of a Cys residue at position 482, which forms a disulfide bond with the AMG 416 peptide agonist in human and that is replaced by a Tyr residue in pig. In terms of biological role, G-protein-coupled receptor that senses changes in the extracellular concentration of calcium ions and plays a key role in maintaining calcium homeostasis. Senses fluctuations in the circulating calcium concentration: activated by elevated circulating calcium, leading to decreased parathyroid hormone (PTH) secretion in parathyroid glands. In kidneys, acts as a key regulator of renal tubular calcium resorption. Ligand binding causes a conformation change that triggers signaling via guanine nucleotide-binding proteins (G-proteins) and modulates the activity of downstream effectors. CASR is coupled with different G(q)/G(11), G(i)/G(o)- or G(s)-classes of G-proteins depending on the context. In the parathyroid and kidney, CASR signals through G(q)/G(11) and G(i)/G(o) G-proteins: G(q)/G(11) coupling activates phospholipase C-beta, releasing diacylglycerol (DAG) and inositol 1,4,5-trisphosphate (IP3) second messengers, while G(i)/G(o) coupling mediates inhibition of adenylate cyclase activity. The G-protein-coupled receptor activity is activated by a co-agonist mechanism: aromatic amino acids, such as Trp or Phe, act concertedly with divalent cations, such as calcium or magnesium, to achieve full receptor activation. Acts as an activator of the NLRP3 inflammasome via G(i)/G(o)-mediated signaling: down-regulation of cyclic AMP (cAMP) relieving NLRP3 inhibition by cAMP. Acts as a regulator of proton-sensing receptor GPR68 in a seesaw manner: CASR-mediated signaling inhibits GPR68 signaling in response to extracellular calcium, while GPR68 inhibits CASR in presence of extracellular protons. This chain is Extracellular calcium-sensing receptor (CASR), found in Sus scrofa (Pig).